Consider the following 218-residue polypeptide: Hypoxanthine-guanine phosphoribosyltransferase (218 aa).

At Ala-2 the chain carries N-acetylalanine. Residue Lys-69 coordinates GMP. At Lys-103 the chain carries N6-acetyllysine. Lys-115 is covalently cross-linked (Glycyl lysine isopeptide (Lys-Gly) (interchain with G-Cter in SUMO1); alternate). Lys-115 is covalently cross-linked (Glycyl lysine isopeptide (Lys-Gly) (interchain with G-Cter in SUMO2); alternate). GMP contacts are provided by residues Glu-134–Thr-142, Lys-166, Lys-186–Val-188, and Asp-194. The active-site Proton acceptor is the Asp-138. Position 142 is a phosphothreonine (Thr-142). Asp-194 contacts Mg(2+).

The protein belongs to the purine/pyrimidine phosphoribosyltransferase family. As to quaternary structure, homotetramer. It depends on Mg(2+) as a cofactor.

The protein localises to the cytoplasm. The catalysed reaction is IMP + diphosphate = hypoxanthine + 5-phospho-alpha-D-ribose 1-diphosphate. It carries out the reaction GMP + diphosphate = guanine + 5-phospho-alpha-D-ribose 1-diphosphate. Its pathway is purine metabolism; IMP biosynthesis via salvage pathway; IMP from hypoxanthine: step 1/1. Converts guanine to guanosine monophosphate, and hypoxanthine to inosine monophosphate. Transfers the 5-phosphoribosyl group from 5-phosphoribosylpyrophosphate onto the purine. Plays a central role in the generation of purine nucleotides through the purine salvage pathway. The sequence is that of Hypoxanthine-guanine phosphoribosyltransferase (HPRT1) from Pan troglodytes (Chimpanzee).